Here is a 456-residue protein sequence, read N- to C-terminus: Putative dihydroorotase (456 aa).

Belongs to the metallo-dependent hydrolases superfamily. DHOase family. Class I DHOase subfamily.

It carries out the reaction (S)-dihydroorotate + H2O = N-carbamoyl-L-aspartate + H(+). It participates in pyrimidine metabolism; UMP biosynthesis via de novo pathway; (S)-dihydroorotate from bicarbonate: step 3/3. Functionally, catalyzes the reversible cyclization of carbamoyl aspartate to dihydroorotate. The sequence is that of Putative dihydroorotase from Rhodopirellula baltica (strain DSM 10527 / NCIMB 13988 / SH1).